Here is a 182-residue protein sequence, read N- to C-terminus: MLTQEVELNMQKSVEACQRNFNTIRTGRANTSLLDRLTVEYYGADTPLKSLATISTPDSQTLAIQPFDLGSLGLIEKAISISDLGFTPNNDGKIIRINIPPLTEERRKQFCKLASKYAEEAKISLRNIRRDAIEKIKGSEKDGEFSEDQSRDQQDSIQKITNKYINEIEKNLSGKEEEILKV.

Belongs to the RRF family.

It is found in the cytoplasm. In terms of biological role, responsible for the release of ribosomes from messenger RNA at the termination of protein biosynthesis. May increase the efficiency of translation by recycling ribosomes from one round of translation to another. In Prochlorococcus marinus (strain SARG / CCMP1375 / SS120), this protein is Ribosome-recycling factor.